A 753-amino-acid polypeptide reads, in one-letter code: 5-methyltetrahydropteroyltriglutamate--homocysteine methyltransferase (753 aa).

5-methyltetrahydropteroyltri-L-glutamate-binding positions include 19-22 (RELK) and arginine 113. L-homocysteine contacts are provided by residues 430–432 (IGS) and glutamate 483. Residues 430-432 (IGS) and glutamate 483 each bind L-methionine. 5-methyltetrahydropteroyltri-L-glutamate contacts are provided by residues 514–515 (RC) and tryptophan 560. Aspartate 598 is a binding site for L-homocysteine. Residue aspartate 598 coordinates L-methionine. Residue glutamate 604 coordinates 5-methyltetrahydropteroyltri-L-glutamate. Positions 640, 642, and 664 each coordinate Zn(2+). The active-site Proton donor is the histidine 693. Cysteine 725 provides a ligand contact to Zn(2+).

Belongs to the vitamin-B12 independent methionine synthase family. Zn(2+) is required as a cofactor.

It carries out the reaction 5-methyltetrahydropteroyltri-L-glutamate + L-homocysteine = tetrahydropteroyltri-L-glutamate + L-methionine. The protein operates within amino-acid biosynthesis; L-methionine biosynthesis via de novo pathway; L-methionine from L-homocysteine (MetE route): step 1/1. Catalyzes the transfer of a methyl group from 5-methyltetrahydrofolate to homocysteine resulting in methionine formation. This chain is 5-methyltetrahydropteroyltriglutamate--homocysteine methyltransferase, found in Rhodococcus jostii (strain RHA1).